A 594-amino-acid polypeptide reads, in one-letter code: uncharacterized protein (594 aa).

The segment at residues Cys-11–Cys-38 is a DNA-binding region (zn(2)-C6 fungal-type). A helical transmembrane segment spans residues Tyr-503–Val-523.

The protein localises to the nucleus. It localises to the membrane. This is an uncharacterized protein from Schizosaccharomyces pombe (strain 972 / ATCC 24843) (Fission yeast).